Here is a 108-residue protein sequence, read N- to C-terminus: Thiosulfate sulfurtransferase GlpE (108 aa).

The 89-residue stretch at 17 to 105 (QEKEAVLVDI…WQRQFPAEVA (89 aa)) folds into the Rhodanese domain. The Cysteine persulfide intermediate role is filled by cysteine 65.

The protein belongs to the GlpE family.

The protein localises to the cytoplasm. The catalysed reaction is thiosulfate + hydrogen cyanide = thiocyanate + sulfite + 2 H(+). The enzyme catalyses thiosulfate + [thioredoxin]-dithiol = [thioredoxin]-disulfide + hydrogen sulfide + sulfite + 2 H(+). In terms of biological role, transferase that catalyzes the transfer of sulfur from thiosulfate to thiophilic acceptors such as cyanide or dithiols. May function in a CysM-independent thiosulfate assimilation pathway by catalyzing the conversion of thiosulfate to sulfite, which can then be used for L-cysteine biosynthesis. The sequence is that of Thiosulfate sulfurtransferase GlpE from Escherichia coli O45:K1 (strain S88 / ExPEC).